The sequence spans 588 residues: Acid beta-fructofuranosidase 1, vacuolar (588 aa).

Over 1–31 (MDTSTSAYAPLPGEDPLFSGHPPASLRRSWK) the chain is Cytoplasmic. The propeptide at 1–115 (MDTSTSAYAP…LSYNWTNAMF (115 aa)) is removed in mature form. A helical; Signal-anchor for type II membrane protein membrane pass occupies residues 32 to 52 (GFAVIFASVLFLLSLVGLIIH). The Lumenal portion of the chain corresponds to 53 to 588 (QGPQQPPDVM…LRALRKEVGR (536 aa)). The tract at residues 57–86 (QPPDVMPDKQDEHHHPQSTTPASETTASWE) is disordered. Residues 62 to 71 (MPDKQDEHHH) show a composition bias toward basic and acidic residues. Residues 73-84 (QSTTPASETTAS) are compositionally biased toward polar residues. Residues 130-133 (WMND), Q149, and W157 contribute to the substrate site. D133 is an active-site residue. The N-linked (GlcNAc...) asparagine glycan is linked to N159. 192–193 (WS) contacts substrate. N226 carries N-linked (GlcNAc...) asparagine glycosylation. Substrate contacts are provided by residues 256-257 (RD), E311, and D344. C499 and C545 form a disulfide bridge.

Belongs to the glycosyl hydrolase 32 family. In terms of assembly, monomer. May be present in two forms, a 70 kDa monomer and a heterodimer of the 30 kDa and 38 kDa subunits. The ratio of the levels of the two forms within cells appears to be regulated developmentally. In terms of processing, glycosylated. In terms of tissue distribution, expressed in buds, stems, roots and leaves. Expressed in the epidermal cells of young leaves and of primordial leaves.

Its subcellular location is the membrane. The protein resides in the vacuole lumen. The catalysed reaction is Hydrolysis of terminal non-reducing beta-D-fructofuranoside residues in beta-D-fructofuranosides.. Functionally, acidic vacuolar invertase involved in light-induced bud burst. The chain is Acid beta-fructofuranosidase 1, vacuolar from Rosa hybrid cultivar.